A 538-amino-acid polypeptide reads, in one-letter code: Syncytin-2 (538 aa).

The signal sequence occupies residues 1-15; that stretch reads MGLLLLVLILTPSLA. The Extracellular portion of the chain corresponds to 16–478; sequence AYRHPDFPLL…GWLNWEGTWK (463 aa). The short motif at 43-46 is the CXXC element; sequence CWLC. 3 disulfides stabilise this stretch: Cys43-Cys46, Cys43-Cys439, and Cys431-Cys438. 8 N-linked (GlcNAc...) asparagine glycosylation sites follow: Asn133, Asn146, Asn177, Asn220, Asn241, Asn247, Asn312, and Asn332. The segment at 354–374 is fusion peptide; that stretch reads FIPLLAGLGILAGTGTGIAGI. The CKS-17 signature appears at 414-430; that stretch reads LQNRRGLDMLTAAQGGI. The CX6CC motif lies at 431–439; the sequence is CLALDEKCC. Asn443 carries N-linked (GlcNAc...) asparagine glycosylation. A helical transmembrane segment spans residues 479–499; it reads WFSWVLPLTGPLVSLLLLLLF. Over 500-538 the chain is Cytoplasmic; sequence GPCLLNLITQFVSSRLQAIKLQTNLSAGRHPRNIQESPF.

Belongs to the gamma type-C retroviral envelope protein family. HERV class-I FRD env subfamily. As to quaternary structure, the surface and transmembrane proteins form a heterodimer. They are attached by non-covalent interactions or by a labile interchain disulfide bond. Interacts with MFSD2A. Post-translationally, specific enzymatic cleavages in vivo yield the mature SU and TM proteins. The CXXC motif is highly conserved across a broad range of retroviral envelope proteins. It is thought to participate in the formation of a labile disulfide bond possibly with the CX6CC motif present in the transmembrane protein. Isomerization of the intersubunit disulfide bond to an SU intrachain disulfide bond is thought to occur upon receptor recognition in order to allow membrane fusion. As to expression, expressed at higher level in placenta. Expressed at lower level in adrenal, bone marrow, brain, breast, colon, kidney, lung, ovary, peripheral blood lymphocytes, prostate, skin, spleen, testis, thymus, thyroid, trachea.

The protein localises to the virion. It is found in the cell membrane. Its function is as follows. This endogenous retroviral envelope protein has retained its original fusogenic properties and participates in trophoblast fusion and the formation of a syncytium during placenta morphogenesis. The interaction with MFSD2A is apparently important for this process. Endogenous envelope proteins may have kept, lost or modified their original function during evolution but this one can still make pseudotypes with MLV, HIV-1 or SIV-1 virions and confer infectivity. Retroviral envelope proteins mediate receptor recognition and membrane fusion during early infection. The surface protein mediates receptor recognition, while the transmembrane protein anchors the envelope heterodimer to the viral membrane through one transmembrane domain. The other hydrophobic domain, called fusion peptide, mediates fusion of the viral membrane with the target cell membrane. This is Syncytin-2 (ERVFRD-1) from Homo sapiens (Human).